Here is a 382-residue protein sequence, read N- to C-terminus: Gap junction alpha-1 protein (382 aa).

At 2–23 (GDWSALGKLLDKVQAYSTAGGK) the chain is on the cytoplasmic side. Position 5 is a phosphoserine (serine 5). The helical transmembrane segment at 24 to 44 (VWLSVLFIFRILLLGTAVESA) threads the bilayer. Over 45 to 76 (WGDEQSAFRCNTQQPGCENVCYDKSFPISHVR) the chain is Extracellular. 2 disulfides stabilise this stretch: cysteine 54–cysteine 192 and cysteine 187–cysteine 198. The chain crosses the membrane as a helical span at residues 77 to 97 (FWVLQIIFVSVPTLLYLAHVF). Residues 98–155 (YVMRKEEKLNKKEEELKVAQTDGVNVDMHLKQIEIKKFKYGIEEHGKVKMRGGLLRTY) are Cytoplasmic-facing. A Glycyl lysine isopeptide (Lys-Gly) (interchain with G-Cter in SUMO) cross-link involves residue lysine 144. Residues 156–176 (IISILFKSIFEVAFLLIQWYI) form a helical membrane-spanning segment. Residues 177 to 207 (YGFSLSAVYTCKRDPCPHQVDCFLSRPTEKT) are Extracellular-facing. The helical transmembrane segment at 208–228 (IFIIFMLVVSLVSLALNIIEL) threads the bilayer. Residues 229-382 (FYVFFKGVKD…SRPRPDDLEI (154 aa)) are Cytoplasmic-facing. Lysine 237 participates in a covalent cross-link: Glycyl lysine isopeptide (Lys-Gly) (interchain with G-Cter in SUMO). The tract at residues 244–382 (SDPYHATSGA…SRPRPDDLEI (139 aa)) is interaction with NOV. Phosphotyrosine is present on tyrosine 247. A phosphoserine mark is found at serine 255 and serine 262. The interaction with UBQLN4 stretch occupies residues 264-382 (KYAYFNGCSS…SRPRPDDLEI (119 aa)). Cysteine 271 is modified (S-nitrosocysteine). Threonine 275 is subject to Phosphothreonine. 2 positions are modified to phosphoserine: serine 306 and serine 314. Positions 317-332 (QNRMGQAGSTISNSHA) are enriched in polar residues. The interval 317–382 (QNRMGQAGST…SRPRPDDLEI (66 aa)) is disordered. Position 325 is a phosphoserine; by CK1 (serine 325). Residue threonine 326 is modified to Phosphothreonine. 2 positions are modified to phosphoserine; by CK1: serine 328 and serine 330. Serine 344 and serine 365 each carry phosphoserine. Positions 362–374 (RPSSRASSRASSR) are enriched in low complexity. At serine 368 the chain carries Phosphoserine; by PKC/PRKCG and PKC/PRKCD. Residues serine 369 and serine 373 each carry the phosphoserine modification.

This sequence belongs to the connexin family. Alpha-type (group II) subfamily. In terms of assembly, a connexon is composed of a hexamer of connexins. Interacts (via C-terminus) with TJP1. Interacts (via C-terminus) with SRC (via SH3 domain). Interacts (not ubiquitinated) with UBQLN4 (via UBA domain). Interacts with SGSM3 and CNST. Interacts with RIC1/CIP150. Interacts with CSNK1D. Interacts with NOV. Interacts with TMEM65. Interacts with ANK3/ANKG and PKP2. Post-translationally, phosphorylated at Ser-368 by PRKCG; phosphorylation induces disassembly of gap junction plaques and inhibition of gap junction activity. Phosphorylation at Ser-325, Ser-328 and Ser-330 by CK1 modulates gap junction assembly. Phosphorylation at Ser-368 by PRKCD triggers its internalization into small vesicles leading to proteasome-mediated degradation. Sumoylated with SUMO1, SUMO2 and SUMO3, which may regulate the level of functional Cx43 gap junctions at the plasma membrane. May be desumoylated by SENP1 or SENP2. In terms of processing, S-nitrosylation at Cys-271 is enriched at the muscle endothelial gap junction in arteries, it augments channel permeability and may regulate of smooth muscle cell to endothelial cell communication. Post-translationally, acetylated in the developing cortex; leading to delocalization from the cell membrane. As to expression, expressed at intercalated disks in the heart (at protein level). Expressed in the fetal cochlea.

The protein resides in the cell membrane. Its subcellular location is the cell junction. It localises to the gap junction. It is found in the endoplasmic reticulum. Gap junction protein that acts as a regulator of bladder capacity. A gap junction consists of a cluster of closely packed pairs of transmembrane channels, the connexons, through which materials of low MW diffuse from one cell to a neighboring cell. May play a critical role in the physiology of hearing by participating in the recycling of potassium to the cochlear endolymph. Negative regulator of bladder functional capacity: acts by enhancing intercellular electrical and chemical transmission, thus sensitizing bladder muscles to cholinergic neural stimuli and causing them to contract. May play a role in cell growth inhibition through the regulation of NOV expression and localization. Plays an essential role in gap junction communication in the ventricles. This chain is Gap junction alpha-1 protein (GJA1), found in Homo sapiens (Human).